Here is a 76-residue protein sequence, read N- to C-terminus: Large ribosomal subunit protein uL24 (76 aa).

It belongs to the universal ribosomal protein uL24 family. As to quaternary structure, part of the 50S ribosomal subunit.

Its function is as follows. One of two assembly initiator proteins, it binds directly to the 5'-end of the 23S rRNA, where it nucleates assembly of the 50S subunit. One of the proteins that surrounds the polypeptide exit tunnel on the outside of the subunit. The sequence is that of Large ribosomal subunit protein uL24 from Sulfurimonas denitrificans (strain ATCC 33889 / DSM 1251) (Thiomicrospira denitrificans (strain ATCC 33889 / DSM 1251)).